A 247-amino-acid polypeptide reads, in one-letter code: Ras-like protein family member 11B (247 aa).

The tract at residues 29–247 is small GTPase-like; it reads ASSRVIKIAV…SAKVRTATSV (219 aa). GTP is bound by residues 40 to 47, 87 to 91, and 152 to 155; these read GGSGVGKT, DTPGV, and NKAD. The segment at 205–228 is disordered; that stretch reads QNTGTPERRKNSLIPRPKSPNMQD.

The protein belongs to the small GTPase superfamily. Ras family.

The catalysed reaction is GTP + H2O = GDP + phosphate + H(+). This is Ras-like protein family member 11B from Xenopus tropicalis (Western clawed frog).